A 143-amino-acid polypeptide reads, in one-letter code: Flagellar assembly factor FliW (143 aa).

It belongs to the FliW family. As to quaternary structure, interacts with flagellin in a 1:1 complex. Two molecules interact with each CsrA dimer; cannot interact with both flagellin and CsrA simultaneously. Has a higher affinity for CsrA than for flagellin. Interacts directly with flagellin (hag), forms a 3-way complex of Hag, FliS and FliW in which Flis and FliW do not directly interact. Interaction with Hag may occur via the C-terminus of Hag.

The protein resides in the cytoplasm. Functionally, acts as an anti-CsrA protein, binds CsrA and prevents it from repressing translation of its target genes, one of which is flagellin. Binds to flagellin (hag), which is implicated in polymerization, and participates in the assembly of the flagellum. An antagonist to translational regulator CsrA, it binds CsrA at an allosteric site and non-competitively inhibits CsrA binding to hag RNA. Partner switching by flagellin between FliW and CsrA provides a flagellar assembly checkpoint to tightly control the timing of flagellin synthesis. Flagellin binds to assembly factor FliW, freeing translation regulator CsrA to repress translation of the flagellin mRNA. When the flagellar hook is assembled flagellin is secreted, depleting intracellular flagellin, which frees FliW to interact with CsrA and inhibits CsrA binding to mRNA. This derepresses flagellin translation and provides protein for flagellar assembly. Once the flagellar filament is completed cytoplasmic flagellin levels rise and CsrA translation repression of flagellin reinitiates. Binds to CsrA and displaces it from hag mRNA. Binds to hag mRNA itself, but only at much higher concentrations than those required to displace CsrA. The protein is Flagellar assembly factor FliW of Bacillus subtilis (strain 168).